A 611-amino-acid chain; its full sequence is Threonine--tRNA ligase (611 aa).

The interval M1 to K27 is disordered. Over residues P8–V24 the composition is skewed to low complexity. Residues D209–P502 form a catalytic region. 3 residues coordinate Zn(2+): C302, H353, and H479.

It belongs to the class-II aminoacyl-tRNA synthetase family. As to quaternary structure, homodimer. Zn(2+) serves as cofactor.

The protein localises to the cytoplasm. It catalyses the reaction tRNA(Thr) + L-threonine + ATP = L-threonyl-tRNA(Thr) + AMP + diphosphate + H(+). Catalyzes the attachment of threonine to tRNA(Thr) in a two-step reaction: L-threonine is first activated by ATP to form Thr-AMP and then transferred to the acceptor end of tRNA(Thr). Also edits incorrectly charged L-seryl-tRNA(Thr). This Synechococcus sp. (strain CC9605) protein is Threonine--tRNA ligase.